A 442-amino-acid chain; its full sequence is Protein bag of marbles (442 aa).

Residues 201–250 (FDMPVKSTMPKSLNVRYQLQVLCTKVERFLVQQRRTLEANRHFDFEKYDE) form a required for interaction with ubiquitin region. Positions 408–442 (VSMEQPSASEEEFEETEEVPSSPPRHTGRVPRFRS) are disordered. Residues 416 to 425 (SEEEFEETEE) are compositionally biased toward acidic residues. Over residues 433 to 442 (HTGRVPRFRS) the composition is skewed to basic residues.

Interacts (via central region) with ubiquitin. Interacts (via C-terminus) with otu (via OTU domain); the interaction enhances otu aggregation into amyloid-like structures and enhances its deubiquitinase activity. Together with otu interacts with CycA/cyclin-A (via C-terminus); the interaction stabilizes CycA by promoting and enhancing otu dependent deubiquitination of CycA. Together with otu interacts with Traf6. Part of a complex composed of at least tut, bam and bgcn; complex formation does not require RNA. Interacts (via C-terminus) with bgcn; the interaction is direct and is not disrupted by eIF4A. Interacts with eIF4A (via multiple contacts); the interaction is direct and is not disrupted by bgcn. Interacts (via N-terminus) with tut; the interaction is direct and mediates the interaction between tut and bgcn. As part of the bam-bgcn-tut complex associates with twin; may recruit the CCR4-NOT1 deadenylation complex to mRNA 3'-UTRs to mediate post-transcriptional regulation of expression. Part of a complex composed of at least mei-P26, bam, bgcn and Sxl; this complex is involved in translational repression of nanos mRNA. Ubiquitinated (C-terminal region). In cystoblasts and/or very early cystocytes in testis (at protein level); expression levels are regulated by mei-P26. In cystoblasts and/or very early cystocytes in ovary. Expressed in the gut; expression levels increase with age.

It is found in the cytoplasm. Its function is as follows. Regulatory component of a deubiquitinase complex consisting of bam and otu. The complex deubiquitinates K63-linked polyubiquitinated proteins, antagonizing the ubiquitination activity of Traf6 and regulating the IMD immune signaling pathway. Otu-bam deubiquitinase activity is regulated by Traf6 dependent immune signaling regulation of bam expression levels; this forms a feedback loop that regulates the IMD immune signaling pathway and balances gut immune activity during aging. The complex deubiquitinates and stabilizes CycA/cyclin-A to regulate CycA-dependent differentiation. Required to initiate both male and female gametogenesis. Part of a complex with bgcn involved in 3'-UTR-dependent translational repression of a subset of mRNAs, including those for mei-P26, nanos and shg/E-cadherin. Repression of mei-P26 is targeted by let-7 miRNA. Involved in a regulatory cascade with mei-P26 to control the progression of cystocytes through transit amplification and the switch to spermatocyte differentiation; mei-P26 facilitates bam accumulation, which in turn represses translation of mei-P26. Forms a complex with tut and bgcn involved in 3'-UTR-dependent post-transcriptional repression of several 3'-RNA processing factors, which promotes germline stem cell lineage differentiation and mitosis-to-meiosis transition. This Drosophila melanogaster (Fruit fly) protein is Protein bag of marbles.